Reading from the N-terminus, the 271-residue chain is tRNA pseudouridine synthase A (271 aa).

The active-site Nucleophile is Asp56. Tyr120 contributes to the substrate binding site.

Belongs to the tRNA pseudouridine synthase TruA family. As to quaternary structure, homodimer.

The catalysed reaction is uridine(38/39/40) in tRNA = pseudouridine(38/39/40) in tRNA. Formation of pseudouridine at positions 38, 39 and 40 in the anticodon stem and loop of transfer RNAs. The sequence is that of tRNA pseudouridine synthase A from Janthinobacterium sp. (strain Marseille) (Minibacterium massiliensis).